Consider the following 177-residue polypeptide: Large ribosomal subunit protein uL6 (177 aa).

Belongs to the universal ribosomal protein uL6 family. As to quaternary structure, part of the 50S ribosomal subunit.

In terms of biological role, this protein binds to the 23S rRNA, and is important in its secondary structure. It is located near the subunit interface in the base of the L7/L12 stalk, and near the tRNA binding site of the peptidyltransferase center. In Rhizobium etli (strain CIAT 652), this protein is Large ribosomal subunit protein uL6.